A 128-amino-acid polypeptide reads, in one-letter code: Ribonuclease P protein component 4 (128 aa).

Zn(2+)-binding residues include Cys-63, Cys-66, Cys-92, and Cys-95.

This sequence belongs to the eukaryotic/archaeal RNase P protein component 4 family. As to quaternary structure, consists of a catalytic RNA component and at least 4 protein subunits. Forms a subcomplex with Rnp1 which stimulates the catalytic RNA. Zn(2+) serves as cofactor.

Its subcellular location is the cytoplasm. The catalysed reaction is Endonucleolytic cleavage of RNA, removing 5'-extranucleotides from tRNA precursor.. Functionally, part of ribonuclease P, a protein complex that generates mature tRNA molecules by cleaving their 5'-ends. In Methanocaldococcus jannaschii (strain ATCC 43067 / DSM 2661 / JAL-1 / JCM 10045 / NBRC 100440) (Methanococcus jannaschii), this protein is Ribonuclease P protein component 4.